The following is a 248-amino-acid chain: ATP synthase subunit a, chloroplastic (248 aa).

4 consecutive transmembrane segments (helical) span residues 96–116 (VPFI…GALL), 135–155 (INTT…AGLY), 200–220 (LVVA…MMLL), and 221–241 (GLFT…AYIG).

It belongs to the ATPase A chain family. F-type ATPases have 2 components, CF(1) - the catalytic core - and CF(0) - the membrane proton channel. CF(1) has five subunits: alpha(3), beta(3), gamma(1), delta(1), epsilon(1). CF(0) has four main subunits: a, b, b' and c.

It localises to the plastid. The protein resides in the chloroplast thylakoid membrane. Its function is as follows. Key component of the proton channel; it plays a direct role in the translocation of protons across the membrane. The polypeptide is ATP synthase subunit a, chloroplastic (Adiantum capillus-veneris (Maidenhair fern)).